A 185-amino-acid chain; its full sequence is NAD(P)H-dependent FAD/FMN reductase GTNG_3158 (185 aa).

Anthranilate 3-monooxygenase consists of a reductase component (GTNG_3158) and an oxygenase component HpaH.

The catalysed reaction is FADH2 + NAD(+) = FAD + NADH + 2 H(+). It catalyses the reaction FADH2 + NADP(+) = FAD + NADPH + 2 H(+). Functionally, involved in the pathway of tryptophan degradation. Reduces FAD/FMN to FADH(2)/FMNH(2), which are subsequently used for the hydroxylation of anthranilate. It can reduce either FAD or flavin mononucleotide (FMN) but prefers FAD. The enzyme has a slight preference for NADPH as acceptor. This is NAD(P)H-dependent FAD/FMN reductase GTNG_3158 from Geobacillus thermodenitrificans (strain NG80-2).